Consider the following 481-residue polypeptide: Proline--tRNA ligase (481 aa).

This sequence belongs to the class-II aminoacyl-tRNA synthetase family. ProS type 3 subfamily. Homodimer.

It is found in the cytoplasm. The enzyme catalyses tRNA(Pro) + L-proline + ATP = L-prolyl-tRNA(Pro) + AMP + diphosphate. In terms of biological role, catalyzes the attachment of proline to tRNA(Pro) in a two-step reaction: proline is first activated by ATP to form Pro-AMP and then transferred to the acceptor end of tRNA(Pro). This chain is Proline--tRNA ligase, found in Thermococcus kodakarensis (strain ATCC BAA-918 / JCM 12380 / KOD1) (Pyrococcus kodakaraensis (strain KOD1)).